Consider the following 734-residue polypeptide: Translation initiation factor IF-2 (734 aa).

A disordered region spans residues 39-110 (SKFAPRSSFT…TGKPETKKRE (72 aa)). Basic and acidic residues predominate over residues 82–110 (DYEKRKLAEQRATRRLKGDTGKPETKKRE). The 168-residue stretch at 238 to 405 (NRPPIVTVMG…SIVLQAEILD (168 aa)) folds into the tr-type G domain. The interval 247–254 (GHVDHGKT) is G1. Residue 247–254 (GHVDHGKT) coordinates GTP. A G2 region spans residues 272-276 (GITQH). Positions 293-296 (DTPG) are G3. Residues 293-297 (DTPGH) and 347-350 (NKCD) contribute to the GTP site. The interval 347–350 (NKCD) is G4. The interval 383-385 (SAK) is G5.

The protein belongs to the TRAFAC class translation factor GTPase superfamily. Classic translation factor GTPase family. IF-2 subfamily.

It is found in the cytoplasm. One of the essential components for the initiation of protein synthesis. Protects formylmethionyl-tRNA from spontaneous hydrolysis and promotes its binding to the 30S ribosomal subunits. Also involved in the hydrolysis of GTP during the formation of the 70S ribosomal complex. This is Translation initiation factor IF-2 from Pelagibacter ubique (strain HTCC1062).